The primary structure comprises 51 residues: uncharacterized protein (51 aa).

A coiled-coil region spans residues 3–30; the sequence is EEKAVSLAKEIIELDIKRDEMLETFMQL.

This is an uncharacterized protein from Bacillus subtilis (strain 168).